The chain runs to 678 residues: MTKNLLVELGLEELPAYVVTPSEKQLGEKMAAFLKENRLSFEAIQTFSTPRRLAVRVTGLSDKQSDLTEDFKGPAKKIALDSDGNFTKAAQGFVRGKGLTVEDIEFREIKGEEYVYVTKEEVGQSVEAIVPGVVDVLKSLTFPVSMHWAGNSFEYIRPVHTLTVLLDEQEFDLDFLDIKGSRVSRGHRFLGKETKIQSALSYEEDLRKQFVIADPCEREQMIVDQIKEIEAKHGVHIEIDADLLNEVLNLVEYPTAFMGSFDAKYLEVPEEVLVTSMKEHQRYFVVRDQDGKLLPNFISVRNGNAERLKNVIKGNEKVLVARLEDGEFFWREDQKLVISDLVEKLNNVTFHEKIGSLREHMIRTGQITVLLAEKAGLSVDETVDLARAAAIYKFDLLTGMVGEFDELQGIMGEKYTLLAGETPAVAAAIREHYMPTSAEGELPESKVGAVLAIADKLDTILSFFSVGLIPSGSNDPYALRRATQGVVRILDAFGWHIAMDELIDSLYALKFDSLTYENKAEVMDFIKARVDKMMGSTPKDIKEAVLAGSNFVVADMLEAASALVEVSKEEDFKPSVESLSRAFNLAEKAEGVATVDSALFENDQEKALAEAVETLVLSGPASQQLKQLFALSPVIDAFFENTMVMAEDQAVRQNRLAILSQLTKKAAKFACFNQINTK.

The protein belongs to the class-II aminoacyl-tRNA synthetase family. In terms of assembly, tetramer of two alpha and two beta subunits.

The protein resides in the cytoplasm. It carries out the reaction tRNA(Gly) + glycine + ATP = glycyl-tRNA(Gly) + AMP + diphosphate. This Streptococcus pneumoniae (strain Taiwan19F-14) protein is Glycine--tRNA ligase beta subunit.